The primary structure comprises 158 residues: Pleckstrin homology domain-containing family J member 1 (158 aa).

A PH domain is found at 15–108 (PTQRAAELGM…WIDAIIKASY (94 aa)).

The chain is Pleckstrin homology domain-containing family J member 1 (plekhj1) from Danio rerio (Zebrafish).